A 582-amino-acid polypeptide reads, in one-letter code: Hemagglutinin-neuraminidase (582 aa).

The helical transmembrane segment at 35-55 (ILVLSVQAVTLILVIVNLGEL) threads the bilayer. Intrachain disulfides connect Cys178/Cys202, Cys192/Cys253, and Cys244/Cys257. Residues Asn284 and Asn329 are each glycosylated (N-linked (GlcNAc...) asparagine; by host). 3 cysteine pairs are disulfide-bonded: Cys350–Cys471, Cys382–Cys392, and Cys465–Cys475. N-linked (GlcNAc...) asparagine; by host glycans are attached at residues Asn400 and Asn448. Asn507 is a glycosylation site (N-linked (GlcNAc...) asparagine; by host). Cys545 and Cys556 are disulfide-bonded.

It belongs to the paramyxoviruses hemagglutinin-neuraminidase family. In terms of assembly, homotetramer; composed of disulfide-linked homodimers. Interacts with F protein trimer.

It localises to the virion membrane. Its subcellular location is the host cell membrane. The enzyme catalyses Hydrolysis of alpha-(2-&gt;3)-, alpha-(2-&gt;6)-, alpha-(2-&gt;8)- glycosidic linkages of terminal sialic acid residues in oligosaccharides, glycoproteins, glycolipids, colominic acid and synthetic substrates.. Attaches the virus to alpha-2,3-linked sialic acid-containing cell receptors and thereby initiating infection. Binding of HN protein to the receptor induces a conformational change that allows the F protein to trigger virion/cell membranes fusion. Binds to the glycan motifs sialyl Lewis (SLe) and GM2 ganglioside (GM2-glycan). Its function is as follows. Neuraminidase activity ensures the efficient spread of the virus by dissociating the mature virions from the neuraminic acid containing glycoproteins. The chain is Hemagglutinin-neuraminidase (HN) from Homo sapiens (Human).